A 237-amino-acid chain; its full sequence is Small ribosomal subunit protein eS4 (237 aa).

The 63-residue stretch at 37–99 (VPLLIVLRDV…REEYYRIFPD (63 aa)) folds into the S4 RNA-binding domain.

Belongs to the eukaryotic ribosomal protein eS4 family.

This chain is Small ribosomal subunit protein eS4, found in Natronomonas pharaonis (strain ATCC 35678 / DSM 2160 / CIP 103997 / JCM 8858 / NBRC 14720 / NCIMB 2260 / Gabara) (Halobacterium pharaonis).